Consider the following 530-residue polypeptide: UDP-glucuronosyltransferase 2B7 (530 aa).

Positions Met1 to Cys17 are cleaved as a signal peptide. N-linked (GlcNAc...) asparagine glycosylation is present at Asn316. UDP-alpha-D-glucuronate contacts are provided by residues Thr374 to Gly380 and Glu400. The chain crosses the membrane as a helical span at residues Ile496 to Phe516.

Belongs to the UDP-glycosyltransferase family.

It localises to the endoplasmic reticulum membrane. It catalyses the reaction glucuronate acceptor + UDP-alpha-D-glucuronate = acceptor beta-D-glucuronoside + UDP + H(+). The catalysed reaction is 17alpha-estradiol + UDP-alpha-D-glucuronate = 17alpha-estradiol 17-O-(beta-D-glucuronate) + UDP + H(+). The enzyme catalyses 17beta-estradiol + UDP-alpha-D-glucuronate = 17beta-estradiol 17-O-(beta-D-glucuronate) + UDP + H(+). It carries out the reaction 2-hydroxy-17beta-estradiol + UDP-alpha-D-glucuronate = 2-hydroxy-17beta-estradiol 3-O-(beta-D-glucuronate) + UDP + H(+). It catalyses the reaction 4-hydroxy-17beta-estradiol + UDP-alpha-D-glucuronate = 17beta-estradiol 4-O-(beta-D-glucuronate) + UDP + H(+). The catalysed reaction is 4-hydroxyestrone + UDP-alpha-D-glucuronate = estrone 4-O-(beta-D-glucuronate) + UDP + H(+). The enzyme catalyses 16alpha-hydroxyestrone + UDP-alpha-D-glucuronate = 16alpha-hydroxyestrone 16-O-(beta-D-glucuronate) + UDP + H(+). It carries out the reaction 16alpha,17beta-estriol + UDP-alpha-D-glucuronate = 16alpha,17beta-estriol 16-O-(beta-D-glucuronate) + UDP + H(+). It catalyses the reaction 16beta,17beta-estriol + UDP-alpha-D-glucuronate = 16beta,17beta-estriol 16-O-(beta-D-glucuronate) + UDP + H(+). The catalysed reaction is 16alpha,17alpha-estriol + UDP-alpha-D-glucuronate = 16alpha,17alpha-estriol 16-O-(beta-D-glucuronate) + UDP + H(+). The enzyme catalyses 16alpha,17alpha-estriol + UDP-alpha-D-glucuronate = 16alpha,17alpha-estriol 17-O-(beta-D-glucuronate) + UDP + H(+). It carries out the reaction epitestosterone + UDP-alpha-D-glucuronate = epitestosterone 17-O-(beta-D-glucuronate) + UDP + H(+). It catalyses the reaction hyodeoxycholate + UDP-alpha-D-glucuronate = hyodeoxycholate 6-O-(beta-D-glucuronate) + UDP + H(+). The catalysed reaction is hyocholate + UDP-alpha-D-glucuronate = hyocholate 6-O-(beta-D-glucuronate) + UDP + H(+). The enzyme catalyses all-trans-retinoate + UDP-alpha-D-glucuronate = all-trans-retinoyl-1-O-(beta-D-glucuronate) + UDP. It carries out the reaction all-trans-4-hydroxyretinoate + UDP-alpha-D-glucuronate = all-trans-4-hydroxy-4-O-(beta-D-glucuronide)-retinoate + UDP + H(+). It catalyses the reaction (E)-ferulate + UDP-alpha-D-glucuronate = (E)-ferulic acid beta-D-glucuronate ester + UDP. The catalysed reaction is 8-iso-prostaglandin F2alpha + UDP-alpha-D-glucuronate = 8-iso-prostaglandin F2alpha-glucuronide + UDP + H(+). The enzyme catalyses 5-epi-5-F2t-IsoP + UDP-alpha-D-glucuronate = 5-epi-5-F2t-IsoP-glucuronide + UDP + H(+). It carries out the reaction (5Z,8Z,11Z,14Z)-eicosatetraenoate + UDP-alpha-D-glucuronate = O-[(5Z),(8Z),(11Z),(14Z)-eicosatetraenoyl]-beta-D-glucuronate + UDP. It catalyses the reaction 15-hydroxy-(5Z,8Z,11Z,13E)-eicosatetraenoate + UDP-alpha-D-glucuronate = 15-O-(beta-D-glucuronosyl)-(5Z,8Z,11Z,14Z)-eicosatetraenoate + UDP + H(+). The catalysed reaction is 20-hydroxy-(5Z,8Z,11Z,14Z)-eicosatetraenoate + UDP-alpha-D-glucuronate = 20-O-(beta-D-glucuronosyl)-(5Z,8Z,11Z,14Z)-eicosatetraenoate + UDP + H(+). The enzyme catalyses (E)-ferulate + UDP-alpha-D-glucuronate = (E)-4-O-(beta-D-glucuronosyl)-ferulate + UDP + H(+). It carries out the reaction prostaglandin B1 + UDP-alpha-D-glucuronate = 15-O-(beta-D-glucuronosyl)-prostaglandin B1 + UDP + H(+). It catalyses the reaction mycophenolate + UDP-alpha-D-glucuronate = mycophenolic acid O-acyl-beta-D-glucuronide + UDP. The catalysed reaction is losartan + UDP-alpha-D-glucuronate = losartan-2-N-beta-D-glucuronide + UDP. The enzyme catalyses candesartan + UDP-alpha-D-glucuronate = candesartan O-beta-D-glucuronoside + UDP. It carries out the reaction candesartan + UDP-alpha-D-glucuronate = candesartan-2-N-beta-D-glucuronide + UDP. It catalyses the reaction zolasartan + UDP-alpha-D-glucuronate = zolarsartan O-beta-D-glucuronoside + UDP. Its function is as follows. UDP-glucuronosyltransferase (UGT) that catalyzes phase II biotransformation reactions in which lipophilic substrates are conjugated with glucuronic acid to increase the metabolite's water solubility, thereby facilitating excretion into either the urine or bile. Essential for the elimination and detoxification of drugs, xenobiotics and endogenous compounds. Catalyzes the glucuronidation of endogenous steroid hormones such as androgens (epitestosterone, androsterone) and estrogens (estradiol, epiestradiol, estriol, catechol estrogens). Also regulates the levels of retinoic acid, a major metabolite of vitamin A involved in apoptosis, cellular growth and differentiation, and embryonic development. Contributes to bile acid (BA) detoxification by catalyzing the glucuronidation of BA substrates, which are natural detergents for dietary lipids absorption. Involved in the glucuronidation of arachidonic acid (AA) and AA-derived eicosanoids including 15-HETE, 20-HETE, PGE2, PGB1 and F2-isoprostanes (8-iso-PGF2alpha and 5-epi-5-F2t-IsoP). Involved in the glucuronidation of the phytochemical ferulic acid at the phenolic or the carboxylic acid group. Involved in the glucuronidation of the AGTR1 angiotensin receptor antagonist losartan, caderastan and zolarsatan, drugs which can inhibit the effect of angiotensin II. Also metabolizes mycophenolate, an immunosuppressive agent. This is UDP-glucuronosyltransferase 2B7 from Rattus norvegicus (Rat).